Here is an 80-residue protein sequence, read N- to C-terminus: Metallothionein-like protein 1 (80 aa).

It belongs to the metallothionein superfamily. Type 15 family.

Metallothioneins have a high content of cysteine residues that bind various heavy metals. This Coffea arabica (Arabian coffee) protein is Metallothionein-like protein 1 (METAL1).